Here is a 183-residue protein sequence, read N- to C-terminus: Protein Syd (183 aa).

This sequence belongs to the Syd family.

The protein resides in the cell inner membrane. Functionally, interacts with the SecY protein in vivo. May bind preferentially to an uncomplexed state of SecY, thus functioning either as a chelating agent for excess SecY in the cell or as a regulatory factor that negatively controls the translocase function. The protein is Protein Syd of Aliivibrio fischeri (strain MJ11) (Vibrio fischeri).